Here is a 78-residue protein sequence, read N- to C-terminus: Apolipoprotein C-I (78 aa).

The N-terminal stretch at 1–26 (MRLILCLPVLVVVLLMVLEGPAPAQG) is a signal peptide.

It belongs to the apolipoprotein C1 family.

The protein localises to the secreted. Inhibitor of lipoprotein binding to the low density lipoprotein (LDL) receptor, LDL receptor-related protein, and very low density lipoprotein (VLDL) receptor. Associates with high density lipoproteins (HDL) and the triacylglycerol-rich lipoproteins in the plasma and makes up about 10% of the protein of the VLDL and 2% of that of HDL. Appears to interfere directly with fatty acid uptake and is also the major plasma inhibitor of cholesteryl ester transfer protein (CETP). Binds free fatty acids and reduces their intracellular esterification. Modulates the interaction of APOE with beta-migrating VLDL and inhibits binding of beta-VLDL to the LDL receptor-related protein. This chain is Apolipoprotein C-I (APOC1), found in Acinonyx jubatus (Cheetah).